Consider the following 296-residue polypeptide: 4-hydroxybenzoate octaprenyltransferase (296 aa).

8 helical membrane passes run 28 to 48 (PIGIYLLLWPTLVAVWIAGNG), 55 to 75 (VLIFALGVVLMRAAGCCINDF), 102 to 122 (AVMLFALLVGVSFLLVLCTNA), 145 to 167 (TYYPQVVLGAAYSWGIPMAFTAA), 174 to 196 (SAWLLYIANLLWTVGYDTYYAMV), 219 to 239 (VIILTLQLLSLGCLLLAGNRF), 241 to 261 (LGGWYHLGLLAAAACFAWEFW), and 275 to 295 (FLHNHWAGMLIFIGVVLDYAL).

It belongs to the UbiA prenyltransferase family. It depends on Mg(2+) as a cofactor.

It is found in the cell inner membrane. The enzyme catalyses all-trans-octaprenyl diphosphate + 4-hydroxybenzoate = 4-hydroxy-3-(all-trans-octaprenyl)benzoate + diphosphate. It participates in cofactor biosynthesis; ubiquinone biosynthesis. In terms of biological role, catalyzes the prenylation of para-hydroxybenzoate (PHB) with an all-trans polyprenyl group. Mediates the second step in the final reaction sequence of ubiquinone-8 (UQ-8) biosynthesis, which is the condensation of the polyisoprenoid side chain with PHB, generating the first membrane-bound Q intermediate 3-octaprenyl-4-hydroxybenzoate. This is 4-hydroxybenzoate octaprenyltransferase from Pseudomonas entomophila (strain L48).